Consider the following 251-residue polypeptide: Ditrans,polycis-undecaprenyl-diphosphate synthase ((2E,6E)-farnesyl-diphosphate specific) (251 aa).

The active site involves aspartate 21. Aspartate 21 serves as a coordination point for Mg(2+). Residues 22-25, tryptophan 26, histidine 38, and 66-68 each bind substrate; these read GNNR and SSE. Asparagine 69 serves as the catalytic Proton acceptor. Residues tryptophan 70, arginine 72, arginine 189, and 195–197 contribute to the substrate site; that span reads RIS. Residue glutamate 208 coordinates Mg(2+).

The protein belongs to the UPP synthase family. As to quaternary structure, homodimer. Mg(2+) is required as a cofactor.

It catalyses the reaction 8 isopentenyl diphosphate + (2E,6E)-farnesyl diphosphate = di-trans,octa-cis-undecaprenyl diphosphate + 8 diphosphate. Functionally, catalyzes the sequential condensation of isopentenyl diphosphate (IPP) with (2E,6E)-farnesyl diphosphate (E,E-FPP) to yield (2Z,6Z,10Z,14Z,18Z,22Z,26Z,30Z,34E,38E)-undecaprenyl diphosphate (di-trans,octa-cis-UPP). UPP is the precursor of glycosyl carrier lipid in the biosynthesis of bacterial cell wall polysaccharide components such as peptidoglycan and lipopolysaccharide. This is Ditrans,polycis-undecaprenyl-diphosphate synthase ((2E,6E)-farnesyl-diphosphate specific) from Pseudomonas putida (strain ATCC 47054 / DSM 6125 / CFBP 8728 / NCIMB 11950 / KT2440).